The primary structure comprises 214 residues: Ribosomal RNA small subunit methyltransferase G (214 aa).

Residues Gly81, Met86, Ala132–Glu133, and Arg147 contribute to the S-adenosyl-L-methionine site.

Belongs to the methyltransferase superfamily. RNA methyltransferase RsmG family.

The protein localises to the cytoplasm. The catalysed reaction is guanosine(527) in 16S rRNA + S-adenosyl-L-methionine = N(7)-methylguanosine(527) in 16S rRNA + S-adenosyl-L-homocysteine. In terms of biological role, specifically methylates the N7 position of guanine in position 527 of 16S rRNA. This is Ribosomal RNA small subunit methyltransferase G from Pseudomonas syringae pv. syringae (strain B728a).